The sequence spans 488 residues: MSIEQDILNLLAVKNIISSDELNCKSTDIHGVLLSLSSKKVVDYTIIPIVERVLTPQGRQVEKEGSQEYNLITMLMKSNLSIDNIDKTTLKYAFKNKWIKMENNQIVLSGTTIQDITQKLLRNLDSISKDEFEELKKRKLVDINKKNIYKITRGENFNIEQKDIINELTTQNLFNISDTSLLKKYNFNLSKVSRFFGSLHPLTKIKSEFKRIFLEMGFSEMNTGKYVESSFWNFDSLFQPQNHPSREIQDTFFLKVPRLNDLNDVDSQYINRVESIHSSTSIPVDEGYDKCYSKGHNNVWSVAEAKKNILRTHTTAISSQMLYKLAQSNLKAEIKNYNIKLFSIDKVFRNETVDATHLAEFHQVEGLISGENLGIKELIHTIKTFFTKLNIHQIRFKPAFNPYTEPSMEIFGYHPQLKKWIELGNSGIFRPEMLLPMGFPKNVVVIAWGLSLERPAMIKLGLKNIRDLVGHKISVEFIRDSPVIFMNK.

Residues 1–146 (MSIEQDILNL…KRKLVDINKK (146 aa)) form a contains the major tRNA-Phe binding sites region. Residues T315, 363-365 (QVE), and Y403 each bind L-phenylalanine. A Mg(2+)-binding site is contributed by E405. F429 provides a ligand contact to L-phenylalanine.

Belongs to the class-II aminoacyl-tRNA synthetase family. Phe-tRNA synthetase alpha subunit type 2 subfamily. In terms of assembly, tetramer of two alpha and two beta subunits. Mg(2+) serves as cofactor.

The protein resides in the cytoplasm. It catalyses the reaction tRNA(Phe) + L-phenylalanine + ATP = L-phenylalanyl-tRNA(Phe) + AMP + diphosphate + H(+). This is Probable phenylalanine--tRNA ligase alpha subunit from Enterocytozoon bieneusi (strain H348) (Microsporidian parasite).